A 1246-amino-acid polypeptide reads, in one-letter code: Putative helicase L115 (1246 aa).

The interval 1-21 (MSKTITKKVNKKTKKSTKINP) is disordered. The 159-residue stretch at 872-1030 (AKFTDGYHGF…YYMLKMLQTG (159 aa)) folds into the Helicase ATP-binding domain. 885 to 892 (SDVGSGKT) serves as a coordination point for ATP.

The chain is Putative helicase L115 from Acanthamoeba polyphaga (Amoeba).